Here is a 269-residue protein sequence, read N- to C-terminus: Lipid II flippase Amj (269 aa).

7 helical membrane passes run 1–21 (MHVI…IHSI), 31–51 (SGAR…MVIV), 84–104 (FLIF…PSFV), 105–125 (ALFS…FQVF), 161–181 (LFVI…SALY), 192–212 (TAVM…AIFV), and 245–265 (VAGT…IAWL).

Belongs to the Amj family.

The protein resides in the cell membrane. It functions in the pathway cell wall biogenesis; peptidoglycan biosynthesis. Functionally, involved in peptidoglycan biosynthesis. Transports lipid-linked peptidoglycan precursors from the inner to the outer leaflet of the cytoplasmic membrane. May serve as a defense mechanism against naturally occurring MurJ antagonists. The sequence is that of Lipid II flippase Amj from Bacillus subtilis (strain 168).